Here is a 434-residue protein sequence, read N- to C-terminus: Glycylpeptide N-tetradecanoyltransferase 1 (434 aa).

Positions 1-24 (MADNNSPPGSVEQKADQIVEANPL) are disordered. Position 2 is an N-acetylalanine (Ala2). Tetradecanoyl-CoA-binding positions include 48 to 51 (HKFW), 184 to 186 (LCV), and 192 to 196 (SKRLA). Leu434 acts as the Proton acceptor; via carboxylate in catalysis.

The protein belongs to the NMT family. In terms of tissue distribution, expressed ubiquitously, with higher levels in young tissues (at protein level).

It is found in the cytoplasm. It catalyses the reaction N-terminal glycyl-[protein] + tetradecanoyl-CoA = N-tetradecanoylglycyl-[protein] + CoA + H(+). Adds a myristoyl group to the N-terminal glycine residue of certain cellular proteins. Can also use decanoyl-CoA and lauroyl-CoA as substrates. In Arabidopsis thaliana (Mouse-ear cress), this protein is Glycylpeptide N-tetradecanoyltransferase 1 (NMT1).